The primary structure comprises 234 residues: Ribosomal RNA large subunit methyltransferase E (234 aa).

Residues 1–37 (MSDDDRRRWKGPGPERQDSGRRSTERKVIARNARTES) form a disordered region. 5 residues coordinate S-adenosyl-L-methionine: glycine 91, tryptophan 93, aspartate 109, aspartate 125, and aspartate 149. The active-site Proton acceptor is the lysine 189.

The protein belongs to the class I-like SAM-binding methyltransferase superfamily. RNA methyltransferase RlmE family.

It is found in the cytoplasm. It catalyses the reaction uridine(2552) in 23S rRNA + S-adenosyl-L-methionine = 2'-O-methyluridine(2552) in 23S rRNA + S-adenosyl-L-homocysteine + H(+). In terms of biological role, specifically methylates the uridine in position 2552 of 23S rRNA at the 2'-O position of the ribose in the fully assembled 50S ribosomal subunit. The polypeptide is Ribosomal RNA large subunit methyltransferase E (Hyphomonas neptunium (strain ATCC 15444)).